A 461-amino-acid chain; its full sequence is D-phenylhydantoinase (461 aa).

Positions 59, 61, and 151 each coordinate a divalent metal cation. The residue at position 151 (K151) is an N6-carboxylysine. Y156 contributes to the substrate binding site. H182 and H239 together coordinate a divalent metal cation. S286 serves as a coordination point for substrate. D313 contacts a divalent metal cation. N335 contributes to the substrate binding site.

It belongs to the metallo-dependent hydrolases superfamily. Hydantoinase/dihydropyrimidinase family. In terms of assembly, homotetramer. A divalent metal cation is required as a cofactor. In terms of processing, carboxylation allows a single lysine to coordinate two divalent metal cations.

It carries out the reaction D-5-phenylhydantoin + H2O = N-carbamoyl-D-phenylglycine + H(+). In terms of biological role, catalyzes the stereospecific hydrolysis of the cyclic amide bond of D-hydantoin derivatives with an aromatic side chains at the 5'-position. Has no activity on dihydropyrimidines. The physiological function is unknown. In Escherichia coli (strain UTI89 / UPEC), this protein is D-phenylhydantoinase.